Consider the following 328-residue polypeptide: D-cysteine desulfhydrase (328 aa).

Residue Lys51 is modified to N6-(pyridoxal phosphate)lysine.

This sequence belongs to the ACC deaminase/D-cysteine desulfhydrase family. Homodimer. Pyridoxal 5'-phosphate serves as cofactor.

The enzyme catalyses D-cysteine + H2O = hydrogen sulfide + pyruvate + NH4(+) + H(+). Its function is as follows. Catalyzes the alpha,beta-elimination reaction of D-cysteine and of several D-cysteine derivatives. It could be a defense mechanism against D-cysteine. This Salmonella paratyphi A (strain AKU_12601) protein is D-cysteine desulfhydrase.